The chain runs to 63 residues: MAGGRIAHATLKGPSVVKEICIGLTLGLVAGGLWKMHHWNEQRKTRSFYDMLEKGQISVVVEE.

A helical membrane pass occupies residues 16 to 34 (VVKEICIGLTLGLVAGGLW).

It belongs to the cytochrome c oxidase subunit 5C family.

It is found in the mitochondrion inner membrane. In terms of biological role, this protein is one of the nuclear-coded polypeptide chains of cytochrome c oxidase, the terminal oxidase in mitochondrial electron transport. The sequence is that of Cytochrome c oxidase subunit 5C (COX5C) from Oryza sativa subsp. japonica (Rice).